Consider the following 739-residue polypeptide: Long-chain-fatty-acid--CoA ligase ACSBG2 (739 aa).

Residues 287–295 (TSGTTGQPK), 478–483 (ELYGMS), D556, R571, and K684 each bind ATP.

The protein belongs to the ATP-dependent AMP-binding enzyme family. Bubblegum subfamily.

The protein localises to the cytoplasm. It catalyses the reaction a long-chain fatty acid + ATP + CoA = a long-chain fatty acyl-CoA + AMP + diphosphate. The catalysed reaction is (5Z,8Z,11Z,14Z)-eicosatetraenoate + ATP + CoA = (5Z,8Z,11Z,14Z)-eicosatetraenoyl-CoA + AMP + diphosphate. The enzyme catalyses hexadecanoate + ATP + CoA = hexadecanoyl-CoA + AMP + diphosphate. It carries out the reaction (9Z)-octadecenoate + ATP + CoA = (9Z)-octadecenoyl-CoA + AMP + diphosphate. It catalyses the reaction (9Z,12Z)-octadecadienoate + ATP + CoA = (9Z,12Z)-octadecadienoyl-CoA + AMP + diphosphate. The catalysed reaction is tetracosanoate + ATP + CoA = tetracosanoyl-CoA + AMP + diphosphate. Functionally, catalyzes the conversion of fatty acids such as long chain and very long-chain fatty acids to their active form acyl-CoAs for both synthesis of cellular lipids, and degradation via beta-oxidation. Can activate diverse saturated, monosaturated and polyunsaturated fatty acids. The sequence is that of Long-chain-fatty-acid--CoA ligase ACSBG2 from Xenopus laevis (African clawed frog).